The primary structure comprises 179 residues: B-cell acute lymphoblastic leukemia-expressed protein (179 aa).

Disordered stretches follow at residues 1–20 (MMKD…TDLQ) and 65–86 (RDTP…RGKA). Residues 10-20 (SWASEESTDLQ) are compositionally biased toward polar residues.

The protein is B-cell acute lymphoblastic leukemia-expressed protein (BLACE) of Homo sapiens (Human).